The chain runs to 99 residues: Malonate decarboxylase acyl carrier protein (99 aa).

At serine 25 the chain carries O-(phosphoribosyl dephospho-coenzyme A)serine.

Covalently binds the prosthetic group of malonate decarboxylase.

Its subcellular location is the cytoplasm. Its function is as follows. Subunit of malonate decarboxylase, it is an acyl carrier protein to which acetyl and malonyl thioester residues are bound via a 2'-(5''-phosphoribosyl)-3'-dephospho-CoA prosthetic group and turn over during the catalytic mechanism. The protein is Malonate decarboxylase acyl carrier protein (mdcC) of Klebsiella pneumoniae.